The primary structure comprises 814 residues: MADHAFHRPGPLKQANKAHKTGRHRSKGAIDNAQKGKIGLRPISHKHKQQQRKEQRRNQMNQLRKNKREEVLEQKRKLGGQNTAPFLVCLLPMHEQIDPMSALEILKSCDSELVVENSPSGIVYINLPRFKQRFAFVTPPVGRGNELIALDYLKVCDTTLLLTTAAFGDDEIFDRWGQRIFNMMSAQGIPTPVVALMDLESINPKRRPAAKQAAQKVISKLLPEEKIMQLDTASEALNVMRRIGGQKKRILHNVANRPHLFGDVVEFKPGSDPSDDLGTLEVTGFLRGQSLNVNGLVHIPGLGDFQLSQVVAPPDPYKLDKSRDGENSEVRLLDRSDPSKRTSLQSENIPDPMDAEQTWPTEDEIAASQAETKKMKLVKRVPKGYSEYQAAWIPDVEEVEDPDGKDDDDMSEDDDDDKEDDNEDFMSCDNKSFEDEYEKRDSDTEEFQDTVSVASEAAINDEKYDQQMDFQEERETLKKLQQARTDQLWPDEIDTPLDVPARERFQKYRGLESFRTSPWDAKENLPADYARIYQFQNFDRTKRRILNEAKEFEGVLPGLYVTLYVINVPESRWNAFKSAQLMDNIIVYGMLPHEHQMCVMNVVLQRMPDSEVPLKSKEQLIIQCGYRRFVVNPIYSQHTNGDKHKFERYFRPYETVCATFYAPIQFPPAPVLAFKVNPDSTLALVARGRLLSCNPDRIVLKRVVLSGHPMRINRKSASIRYMFFYKEDVEYFKPVKLRTKCGRLGHIKESLGTHGHMKCYFDGQLRSYDTAFMYLYKRVFPKWTYEECLVRTAEHERQHASANRRSSQQVAMEE.

The segment at 1–67 (MADHAFHRPG…NQMNQLRKNK (67 aa)) is disordered. The segment covering 16–27 (NKAHKTGRHRSK) has biased composition (basic residues). One can recognise a Bms1-type G domain in the interval 84 to 249 (APFLVCLLPM…MRRIGGQKKR (166 aa)). Disordered stretches follow at residues 316–357 (PYKL…DAEQ) and 392–448 (WIPD…EEFQ). Positions 317–340 (YKLDKSRDGENSEVRLLDRSDPSK) are enriched in basic and acidic residues. A compositionally biased stretch (acidic residues) spans 395 to 426 (DVEEVEDPDGKDDDDMSEDDDDDKEDDNEDFM). The segment covering 431–442 (KSFEDEYEKRDS) has biased composition (basic and acidic residues). Phosphothreonine is present on threonine 444.

This sequence belongs to the TRAFAC class translation factor GTPase superfamily. Bms1-like GTPase family. TSR1 subfamily.

The protein resides in the nucleus. It is found in the nucleolus. Required during maturation of the 40S ribosomal subunit in the nucleolus. This Drosophila melanogaster (Fruit fly) protein is Pre-rRNA-processing protein TSR1 homolog.